The chain runs to 156 residues: 6,7-dimethyl-8-ribityllumazine synthase (156 aa).

5-amino-6-(D-ribitylamino)uracil-binding positions include Phe24, 56-58 (SFE), and 80-82 (AVV). 85 to 86 (ET) lines the (2S)-2-hydroxy-3-oxobutyl phosphate pocket. Residue His88 is the Proton donor of the active site. A 5-amino-6-(D-ribitylamino)uracil-binding site is contributed by Phe113. Position 127 (Arg127) interacts with (2S)-2-hydroxy-3-oxobutyl phosphate.

Belongs to the DMRL synthase family.

The enzyme catalyses (2S)-2-hydroxy-3-oxobutyl phosphate + 5-amino-6-(D-ribitylamino)uracil = 6,7-dimethyl-8-(1-D-ribityl)lumazine + phosphate + 2 H2O + H(+). It participates in cofactor biosynthesis; riboflavin biosynthesis; riboflavin from 2-hydroxy-3-oxobutyl phosphate and 5-amino-6-(D-ribitylamino)uracil: step 1/2. In terms of biological role, catalyzes the formation of 6,7-dimethyl-8-ribityllumazine by condensation of 5-amino-6-(D-ribitylamino)uracil with 3,4-dihydroxy-2-butanone 4-phosphate. This is the penultimate step in the biosynthesis of riboflavin. The sequence is that of 6,7-dimethyl-8-ribityllumazine synthase from Thermococcus kodakarensis (strain ATCC BAA-918 / JCM 12380 / KOD1) (Pyrococcus kodakaraensis (strain KOD1)).